Reading from the N-terminus, the 497-residue chain is Vacuolar-processing enzyme (497 aa).

An N-terminal signal peptide occupies residues 1 to 31 (METHKSLLFFTNYVLFLVFTLSFLPIPGLLA). The active site involves His-180. Cys-222 serves as the catalytic Nucleophile. Cys-255 and Cys-269 are oxidised to a cystine. N-linked (GlcNAc...) asparagine glycosylation is found at Asn-320 and Asn-374. 2 disulfide bridges follow: Cys-433/Cys-463 and Cys-445/Cys-480.

This sequence belongs to the peptidase C13 family.

Asparagine-specific endopeptidase involved in the processing of vacuolar seed protein precursors into the mature forms. The sequence is that of Vacuolar-processing enzyme from Ricinus communis (Castor bean).